Consider the following 294-residue polypeptide: MDFQVFIITGLSGAGKSQSLRILEDLGFFCVDNIPPKLVPTLIDLCLATNGKISGLAVVIDIRTENFLESFKEMVEIIKSRNIPYKILFLEAKDEVIVKRYNETRRIHPLLKEGGTILESIRLEKEKLWEIRNLATDIVNTSDFSIKELKEVILKIVTSLNTTVKPNFLITITSFGFKYGVPIDAHLVFDVRFLPNPFYDPKLRPFSGKSEEVRGFVLSKKEARDFIEHIKKLLDFLIPLYEEEGRTVLNIAIGCTGGRHRAVVIADEIFFYLAPKYNTHLLHRDIEKDVHILK.

ATP is bound at residue 10 to 17 (GLSGAGKS). Position 61-64 (61-64 (DIRT)) interacts with GTP.

The protein belongs to the RapZ-like family.

Displays ATPase and GTPase activities. This Dictyoglomus turgidum (strain DSM 6724 / Z-1310) protein is Nucleotide-binding protein Dtur_1129.